The following is a 349-amino-acid chain: Inositol-tetrakisphosphate 1-kinase 2 (349 aa).

2 residues coordinate 1D-myo-inositol 1,3,4-trisphosphate: K48 and K90. ATP-binding residues include R125 and K175. H186 and K218 together coordinate 1D-myo-inositol 1,3,4-trisphosphate. Residues 207-218 and S233 each bind ATP; that span reads QEFVNHGGILFK. Residues D298, D313, and N315 each coordinate Mg(2+). Position 315 (N315) interacts with 1D-myo-inositol 1,3,4-trisphosphate.

It belongs to the ITPK1 family. As to quaternary structure, monomer. Mg(2+) serves as cofactor.

The catalysed reaction is 1D-myo-inositol 3,4,5,6-tetrakisphosphate + ATP = 1D-myo-inositol 1,3,4,5,6-pentakisphosphate + ADP + H(+). It catalyses the reaction 1D-myo-inositol 1,3,4-trisphosphate + ATP = 1D-myo-inositol 1,3,4,5-tetrakisphosphate + ADP + H(+). It carries out the reaction 1D-myo-inositol 1,3,4-trisphosphate + ATP = 1D-myo-inositol 1,3,4,6-tetrakisphosphate + ADP + H(+). Functionally, kinase that can phosphorylate various inositol polyphosphate such as Ins(3,4,5,6)P4 or Ins(1,3,4)P3 and participates in phytic acid biosynthesis in developing seeds. Phytic acid is the primary storage form of phosphorus in cereal grains and other plant seeds. This is Inositol-tetrakisphosphate 1-kinase 2 (ITPK2) from Oryza sativa subsp. indica (Rice).